Here is a 129-residue protein sequence, read N- to C-terminus: Sigma factor-binding protein Crl (129 aa).

The essential for activity stretch occupies residues 99-119; it reads TQNCFHLKLVKTLEENFQLSV.

The protein belongs to the Crl family.

It localises to the cytoplasm. In terms of biological role, binds to the sigma-S subunit of RNA polymerase, activating expression of sigma-S-regulated genes. Stimulates RNA polymerase holoenzyme formation and may bind to several other sigma factors, such as sigma-70 and sigma-32. In Vibrio vulnificus (strain CMCP6), this protein is Sigma factor-binding protein Crl.